The sequence spans 194 residues: WASH complex subunit 3 (194 aa).

M1 carries the post-translational modification N-acetylmethionine. Positions 46–74 (TVCEEKLADLSLRIQQIETTLNILDAKLS) form a coiled coil. Residues 98 to 123 (THSEATSEQSQQNSLQDSGPQESEVT) are compositionally biased toward polar residues. Disordered stretches follow at residues 98-125 (THSE…VTPE) and 158-194 (SEGL…SFSD).

The protein belongs to the CCDC53 family. As to quaternary structure, component of the WASH core complex also described as WASH regulatory complex (SHRC) composed of WASHC1, WASHC2, WASHC3, WASHC4 and WASHC5. The WASH core complex associates via WASHC2 with the F-actin-capping protein dimer (formed by CAPZA1, CAPZA2 or CAPZA3 and CAPZB) in a transient or substoichiometric manner which was initially described as WASH complex.

It is found in the early endosome. In terms of biological role, acts as a component of the WASH core complex that functions as a nucleation-promoting factor (NPF) at the surface of endosomes, where it recruits and activates the Arp2/3 complex to induce actin polymerization, playing a key role in the fission of tubules that serve as transport intermediates during endosome sorting. This chain is WASH complex subunit 3, found in Bos taurus (Bovine).